We begin with the raw amino-acid sequence, 93 residues long: Small ribosomal subunit protein uS19c (93 aa).

It belongs to the universal ribosomal protein uS19 family.

The protein localises to the plastid. It localises to the chloroplast. Protein S19 forms a complex with S13 that binds strongly to the 16S ribosomal RNA. The polypeptide is Small ribosomal subunit protein uS19c (Brachypodium distachyon (Purple false brome)).